A 233-amino-acid polypeptide reads, in one-letter code: Superoxide dismutase [Mn], mitochondrial (233 aa).

The N-terminal 26 residues, 1–26 (MFAKTAAANLTKKGGLSLLSTTARRT), are a transit peptide targeting the mitochondrion. Residues histidine 52 and histidine 107 each contribute to the Mn(2+) site. Threonine 147 and threonine 149 each carry phosphothreonine. Positions 194 and 198 each coordinate Mn(2+).

It belongs to the iron/manganese superoxide dismutase family. As to quaternary structure, homotetramer. The cofactor is Mn(2+).

It is found in the mitochondrion matrix. It carries out the reaction 2 superoxide + 2 H(+) = H2O2 + O2. Destroys superoxide anion radicals which are normally produced within the cells and which are toxic to biological systems. This chain is Superoxide dismutase [Mn], mitochondrial (SOD2), found in Saccharomyces cerevisiae (strain ATCC 204508 / S288c) (Baker's yeast).